Reading from the N-terminus, the 213-residue chain is MAAPAVSGFSRQVRCFSTSVVRPFTKLVRPPVQIYGIEGRYATALYSAASKQNKLEQVEKELLRVAQLLKEPKMAASIMNPYIKRSIKVKSLNDMTTKEKFSPLTSNLMNLLAENGRLNNTPGVISAFSTIMSVHRGEVPCSVTTASPLDEATLSELKTVLQSFLSKNQILKLEVKTDPSIMGGMIIRIGEKYVDMSAKTKIQKLSRVMREVF.

Residues 1-23 (MAAPAVSGFSRQVRCFSTSVVRP) constitute a mitochondrion transit peptide. The SIFI-degron motif lies at 5 to 23 (AVSGFSRQVRCFSTSVVRP). Residues K54, K60, K70, and K73 each carry the N6-acetyllysine modification. K90 carries the post-translational modification N6-succinyllysine. K100 and K158 each carry N6-acetyllysine; alternate. 2 positions are modified to N6-succinyllysine; alternate: K100 and K158. K172, K176, and K192 each carry N6-acetyllysine. K199 carries the N6-succinyllysine modification.

This sequence belongs to the ATPase delta chain family. Component of the ATP synthase complex composed at least of ATP5F1A/subunit alpha, ATP5F1B/subunit beta, ATP5MC1/subunit c (homooctomer), MT-ATP6/subunit a, MT-ATP8/subunit 8, ATP5ME/subunit e, ATP5MF/subunit f, ATP5MG/subunit g, ATP5MK/subunit k, ATP5MJ/subunit j, ATP5F1C/subunit gamma, ATP5F1D/subunit delta, ATP5F1E/subunit epsilon, ATP5PF/subunit F6, ATP5PB/subunit b, ATP5PD/subunit d, ATP5PO/subunit OSCP. ATP synthase complex consists of a soluble F(1) head domain (subunits alpha(3) and beta(3)) - the catalytic core - and a membrane F(0) domain - the membrane proton channel (subunits c, a, 8, e, f, g, k and j). These two domains are linked by a central stalk (subunits gamma, delta, and epsilon) rotating inside the F1 region and a stationary peripheral stalk (subunits F6, b, d, and OSCP). In response to mitochondrial stress, the precursor protein is ubiquitinated by the SIFI complex in the cytoplasm before mitochondrial import, leading to its degradation. Within the SIFI complex, UBR4 initiates ubiquitin chain that are further elongated or branched by KCMF1.

The protein localises to the mitochondrion. It localises to the mitochondrion inner membrane. In terms of biological role, subunit OSCP, of the mitochondrial membrane ATP synthase complex (F(1)F(0) ATP synthase or Complex V) that produces ATP from ADP in the presence of a proton gradient across the membrane which is generated by electron transport complexes of the respiratory chain. ATP synthase complex consist of a soluble F(1) head domain - the catalytic core - and a membrane F(1) domain - the membrane proton channel. These two domains are linked by a central stalk rotating inside the F(1) region and a stationary peripheral stalk. During catalysis, ATP synthesis in the catalytic domain of F(1) is coupled via a rotary mechanism of the central stalk subunits to proton translocation. In vivo, can only synthesize ATP although its ATP hydrolase activity can be activated artificially in vitro. Part of the complex F(0) domain. Part of the complex F(0) domain and the peripheric stalk, which acts as a stator to hold the catalytic alpha(3)beta(3) subcomplex and subunit a/ATP6 static relative to the rotary elements. The protein is ATP synthase peripheral stalk subunit OSCP, mitochondrial of Rhinolophus ferrumequinum (Greater horseshoe bat).